Here is a 222-residue protein sequence, read N- to C-terminus: Adenylate kinase (222 aa).

Residue 10–15 coordinates ATP; sequence GAGKGT. The NMP stretch occupies residues 30 to 59; the sequence is STGDMLRAAVKAGTPLGIEAKKVMDAGGLV. AMP-binding positions include threonine 31, arginine 36, 57-59, 85-88, and glutamine 92; these read GLV and GFPR. The segment at 122–159 is LID; sequence GRRVHVASGRTYHVKYNPPKNEGQDDETGDPLIQRDDD. ATP is bound by residues arginine 123 and 132-133; that span reads TY. Residues 135–162 are disordered; sequence VKYNPPKNEGQDDETGDPLIQRDDDKEE. AMP contacts are provided by arginine 156 and arginine 167. Glycine 207 serves as a coordination point for ATP.

Belongs to the adenylate kinase family. As to quaternary structure, monomer.

The protein localises to the cytoplasm. It carries out the reaction AMP + ATP = 2 ADP. It participates in purine metabolism; AMP biosynthesis via salvage pathway; AMP from ADP: step 1/1. Catalyzes the reversible transfer of the terminal phosphate group between ATP and AMP. Plays an important role in cellular energy homeostasis and in adenine nucleotide metabolism. This chain is Adenylate kinase, found in Ralstonia nicotianae (strain ATCC BAA-1114 / GMI1000) (Ralstonia solanacearum).